Consider the following 210-residue polypeptide: Probable GTP-binding protein EngB (210 aa).

Positions 25–199 (TGIEVAFAGR…RQKLDTWFSE (175 aa)) constitute an EngB-type G domain. GTP is bound by residues 33-40 (GRSNAGKS), 60-64 (GRTQL), 78-81 (DLPG), 145-148 (TKAD), and 178-180 (FSS). Mg(2+) contacts are provided by Ser40 and Thr62.

Belongs to the TRAFAC class TrmE-Era-EngA-EngB-Septin-like GTPase superfamily. EngB GTPase family. Mg(2+) is required as a cofactor.

Its function is as follows. Necessary for normal cell division and for the maintenance of normal septation. This is Probable GTP-binding protein EngB from Shigella flexneri.